Reading from the N-terminus, the 100-residue chain is Putative septation protein SpoVG (100 aa).

The protein belongs to the SpoVG family.

Could be involved in septation. The polypeptide is Putative septation protein SpoVG (Staphylococcus aureus (strain JH1)).